Reading from the N-terminus, the 198-residue chain is Na(+)-translocating NADH-quinone reductase subunit E (198 aa).

Transmembrane regions (helical) follow at residues 11–31 (SIFIENLALSFFLGMCTFLAV), 39–59 (MGLGIAVIVVQTVAVPANNLI), 77–97 (FLSFITFIGVIAALVQILEMA), 110–130 (GIFLPLITVNCAIFGGVSFMV), 140–160 (VVYGVGSGAGWMLAIVAMAGI), and 176–196 (LGITFITAGLMALGFMSFSGI).

Belongs to the NqrDE/RnfAE family. In terms of assembly, composed of six subunits; NqrA, NqrB, NqrC, NqrD, NqrE and NqrF.

It localises to the cell inner membrane. It carries out the reaction a ubiquinone + n Na(+)(in) + NADH + H(+) = a ubiquinol + n Na(+)(out) + NAD(+). NQR complex catalyzes the reduction of ubiquinone-1 to ubiquinol by two successive reactions, coupled with the transport of Na(+) ions from the cytoplasm to the periplasm. NqrA to NqrE are probably involved in the second step, the conversion of ubisemiquinone to ubiquinol. The polypeptide is Na(+)-translocating NADH-quinone reductase subunit E (Aeromonas salmonicida (strain A449)).